The sequence spans 236 residues: tRNA (guanine-N(1)-)-methyltransferase (236 aa).

Residues G110 and 129 to 134 (LGDFVL) each bind S-adenosyl-L-methionine.

This sequence belongs to the RNA methyltransferase TrmD family. In terms of assembly, homodimer.

It is found in the cytoplasm. The catalysed reaction is guanosine(37) in tRNA + S-adenosyl-L-methionine = N(1)-methylguanosine(37) in tRNA + S-adenosyl-L-homocysteine + H(+). Its function is as follows. Specifically methylates guanosine-37 in various tRNAs. In Clostridium perfringens (strain ATCC 13124 / DSM 756 / JCM 1290 / NCIMB 6125 / NCTC 8237 / Type A), this protein is tRNA (guanine-N(1)-)-methyltransferase.